The primary structure comprises 504 residues: Maturase K (504 aa).

The protein belongs to the intron maturase 2 family. MatK subfamily.

It localises to the plastid. The protein localises to the chloroplast. Functionally, usually encoded in the trnK tRNA gene intron. Probably assists in splicing its own and other chloroplast group II introns. The protein is Maturase K of Carpinus betulus (European hornbeam).